Here is a 407-residue protein sequence, read N- to C-terminus: Argininosuccinate synthase (407 aa).

ATP is bound by residues 10 to 18 (AYSGGLDTS) and alanine 37. Residues tyrosine 90 and serine 95 each coordinate L-citrulline. Glycine 120 is an ATP binding site. L-aspartate contacts are provided by threonine 122, asparagine 126, and aspartate 127. Position 126 (asparagine 126) interacts with L-citrulline. The L-citrulline site is built by arginine 130, serine 181, serine 190, glutamate 266, and tyrosine 278.

The protein belongs to the argininosuccinate synthase family. Type 1 subfamily. As to quaternary structure, homotetramer.

Its subcellular location is the cytoplasm. The enzyme catalyses L-citrulline + L-aspartate + ATP = 2-(N(omega)-L-arginino)succinate + AMP + diphosphate + H(+). It participates in amino-acid biosynthesis; L-arginine biosynthesis; L-arginine from L-ornithine and carbamoyl phosphate: step 2/3. The polypeptide is Argininosuccinate synthase (Ruegeria sp. (strain TM1040) (Silicibacter sp.)).